Consider the following 119-residue polypeptide: Large ribosomal subunit protein uL18 (119 aa).

It belongs to the universal ribosomal protein uL18 family. Part of the 50S ribosomal subunit; part of the 5S rRNA/L5/L18/L25 subcomplex. Contacts the 5S and 23S rRNAs.

This is one of the proteins that bind and probably mediate the attachment of the 5S RNA into the large ribosomal subunit, where it forms part of the central protuberance. This is Large ribosomal subunit protein uL18 from Endomicrobium trichonymphae.